We begin with the raw amino-acid sequence, 329 residues long: Beta-tectorin (329 aa).

An N-terminal signal peptide occupies residues methionine 1–alanine 17. The 269-residue stretch at proline 19–methionine 287 folds into the ZP domain. Residues asparagine 80, asparagine 104, asparagine 116, and asparagine 145 are each glycosylated (N-linked (GlcNAc...) asparagine). A disulfide bridge links cysteine 204 with cysteine 264. A lipid anchor (GPI-anchor amidated glycine) is attached at glycine 304. Positions leucine 305–leucine 329 are cleaved as a propeptide — removed in mature form.

In terms of assembly, may form homomeric filament after self-association or heteromeric filament after association with alpha-tectorin. Post-translationally, the N-terminus is blocked. In terms of processing, N-glycosylated. The presence of a hydrophobic C-terminus preceded by a potential cleavage site strongly suggests that tectorins are synthesized as glycosylphosphatidylinositol-linked, membrane-bound precursors. Tectorins are targeted to the apical surface of the inner ear epithelia by the lipid and proteolytically released into the extracellular compartment. In terms of tissue distribution, exclusively expressed in the inner ear, where it is found in basilar papilla, clear cells, supporting cells, cuboidal cells and the lagena macula.

It localises to the cell membrane. The protein localises to the secreted. Its subcellular location is the extracellular space. The protein resides in the extracellular matrix. Its function is as follows. One of the major non-collagenous components of the tectorial membrane. The tectorial membrane is an extracellular matrix of the inner ear that covers the neuroepithelium of the cochlea and contacts the stereocilia bundles of specialized sensory hair cells. Sound induces movement of these hair cells relative to the tectorial membrane, deflects the stereocilia and leads to fluctuations in hair-cell membrane potential, transducing sound into electrical signals. This chain is Beta-tectorin (TECTB), found in Gallus gallus (Chicken).